Reading from the N-terminus, the 530-residue chain is Chaperone Ric-8A (530 aa).

S435 carries the post-translational modification Phosphoserine. Residues T440 and T442 each carry the phosphothreonine modification. Residues S501, S522, S523, and S527 each carry the phosphoserine modification.

It belongs to the synembryn family. As to quaternary structure, interacts with GDP-bound G alpha proteins GNAI1, GNAO1 and GNAQ, and with GNA13 with lower affinity. Does not interact with G-alpha proteins when they are in complex with subunits beta and gamma. Interacts (via C-terminus) with RGS14; the interaction stimulates the dissociation of the complex between RGS14 and the active GTP-bound form of GNAI1. Interacts with NCS1; interaction is favored in the absence of Ca(2+) and myristoylation of NCS1 is not required. Phosphorylated at Ser-435 and Thr-440 by CK2, stabilizing its interface with G alpha proteins.

The protein localises to the cytoplasm. It is found in the cell cortex. In terms of biological role, chaperone that specifically binds and folds nascent G alpha proteins prior to G protein heterotrimer formation, promoting their stability and activity: folds GNAI1, GNAO1, GNA13 and GNAQ. Does not fold G(s) G-alpha proteins GNAS nor GNAL. Also acts as a guanine nucleotide exchange factor (GEF) for G alpha proteins by stimulating exchange of bound GDP for free GTP. Involved in regulation of microtubule pulling forces during mitotic movement of chromosomes by stimulating G(i)-alpha protein (GNAI1), possibly leading to release G(i)-alpha-GTP and NuMA proteins from the NuMA-GPSM2-G(i)-alpha-GDP complex. Also acts as an activator for G(q)-alpha (GNAQ) protein by enhancing the G(q)-coupled receptor-mediated ERK activation. The protein is Chaperone Ric-8A (RIC8A) of Pongo abelii (Sumatran orangutan).